The primary structure comprises 193 residues: C-type lectin domain family 3 member A homolog (193 aa).

The signal sequence occupies residues 1–24; the sequence is MAQAGLLIWLFFTILLLDLTCTQS. Intrachain disulfides connect C66–C76, C93–C188, and C164–C180. One can recognise a C-type lectin domain in the interval 72–189; it reads IHKKCYLSFE…CRSLKKYICE (118 aa).

The protein resides in the secreted. In Xenopus laevis (African clawed frog), this protein is C-type lectin domain family 3 member A homolog (clec3a).